The chain runs to 501 residues: Ribose import ATP-binding protein RbsA (501 aa).

2 ABC transporter domains span residues 5-241 (LSLE…VGRK) and 252-498 (LRND…TGGV). Residue 37-44 (GENGAGKS) participates in ATP binding.

Belongs to the ABC transporter superfamily. Ribose importer (TC 3.A.1.2.1) family. The complex is composed of an ATP-binding protein (RbsA), two transmembrane proteins (RbsC) and a solute-binding protein (RbsB).

Its subcellular location is the cell inner membrane. The catalysed reaction is D-ribose(out) + ATP + H2O = D-ribose(in) + ADP + phosphate + H(+). Part of the ABC transporter complex RbsABC involved in ribose import. Responsible for energy coupling to the transport system. This chain is Ribose import ATP-binding protein RbsA, found in Hahella chejuensis (strain KCTC 2396).